Here is a 199-residue protein sequence, read N- to C-terminus: Ubiquitin-conjugating enzyme E2-22 kDa (199 aa).

Positions Met4–Gly154 constitute a UBC core domain. The Glycyl thioester intermediate role is filled by Cys92. The UBA domain occupies Asp161–Ser199.

It belongs to the ubiquitin-conjugating enzyme family. Interacts with Rpn10. As to expression, during gastrulation, expression is highest in the invaginating posterior midgut primordium (PMG), high expression is also observed in the cephalic furrow and ventral ectodermal neurogenic region. In stage 10-11 embryos, expression is high in the pole cells present in the pocket formed by the PMG. During germ band retraction, expression appears to reinitiate in many tissues, especially the gut and nervous system. After dorsal closure, expression is detectable at low levels throughout the embryo.

The catalysed reaction is S-ubiquitinyl-[E1 ubiquitin-activating enzyme]-L-cysteine + [E2 ubiquitin-conjugating enzyme]-L-cysteine = [E1 ubiquitin-activating enzyme]-L-cysteine + S-ubiquitinyl-[E2 ubiquitin-conjugating enzyme]-L-cysteine.. The protein operates within protein modification; protein ubiquitination. In terms of biological role, catalyzes the covalent attachment of ubiquitin to other proteins. The chain is Ubiquitin-conjugating enzyme E2-22 kDa from Drosophila melanogaster (Fruit fly).